The chain runs to 445 residues: Phosphoglucosamine mutase (445 aa).

The active-site Phosphoserine intermediate is the Ser101. Mg(2+)-binding residues include Ser101, Asp240, Asp242, and Asp244. Ser101 carries the phosphoserine modification.

It belongs to the phosphohexose mutase family. The cofactor is Mg(2+). In terms of processing, activated by phosphorylation.

The catalysed reaction is alpha-D-glucosamine 1-phosphate = D-glucosamine 6-phosphate. In terms of biological role, catalyzes the conversion of glucosamine-6-phosphate to glucosamine-1-phosphate. This Pseudomonas paraeruginosa (strain DSM 24068 / PA7) (Pseudomonas aeruginosa (strain PA7)) protein is Phosphoglucosamine mutase.